A 156-amino-acid polypeptide reads, in one-letter code: MAAPALPVSLTPALSDRDAIADALYRGVIAFDTADEVLFKSALTEDAVLVLNGTVMEGYDAIYSGCYVNIAKMDTNHFLTNMRVNITEESKAQVSCSALSQHYRGGEGMKPGSDFLLAGGLYAVELVKDAGDGLWKIKHWTLKTTWGQGDWAVFGK.

The protein operates within secondary metabolite biosynthesis. Part of the tra gene cluster that produces terrestric acid. The clavatol biosynthesis cluster cla and the terrestric acid cluster tra are both involved in the production of peniphenones and penilactones. The non-reducing PKS claF is responsible for the formation of clavatol from successive condensations of 3 malonyl-CoA units, presumably with a simple acetyl-CoA starter unit, and 2 methylation steps. The esterase claE probably collaborates with claF by catalyzing the hydrolysis of ACP-bound acyl intermediates to free the ACP from stalled intermediates. The clavatol oxidase claD then converts clavatol to hydroxyclavatol. Spontaneous dehydration of hydroxyclavatol leads to the accumulation of the highly active ortho-quinone methide. On the other hand, the PKS-NRPS hybrid traA is involved in the formation of crustosic acid, with the help of traB and traD. The polyketide synthase module (PKS) of traA is responsible for the synthesis of the polyketide backbone via the condensation of an acetyl-CoA starter unit with 3 malonyl-CoA units. The downstream nonribosomal peptide synthetase (NRPS) module then amidates the carboxyl end of the polyketide with L-malic acid. Because traA lacks a designated enoylreductase (ER) domain, the required activity is provided the enoyl reductase traG. Crustosic acid undergoes decarboxylation and isomerization to the terrestric acid, catalyzed by the 2-oxoglutarate-dependent dioxygenase traH. Both acids are further converted to the 2 gamma-butyrolactones (R)-5-methyltetronic acid and (S)-5-carboxylmethyltetronic acid, with involvement of the cytochrome P450 monooxygenase claJ. Spontaneous addition of the methide to these gamma-butyrolactones leads to peniphenone D and penilactone D, which undergo again stereospecific attacking by methide to give penilactones A and B. TraE seems not to be involved in the biosynthesis of peniphenones and penilactones in the conditions used to study its function. The polypeptide is Terrestric acid biosynthesis cluster protein E (Penicillium crustosum (Blue mold fungus)).